A 469-amino-acid chain; its full sequence is uncharacterized protein (469 aa).

The interval 203-244 (ACPVPPQGHASSAADQAGVPERGRKRAHEGPGAGEAASAGRG) is disordered.

Belongs to the epstein-barr virus LF1 family.

This is an uncharacterized protein from Epstein-Barr virus (strain AG876) (HHV-4).